Here is a 264-residue protein sequence, read N- to C-terminus: MSLSLLFLIFCSHLIHSAWAHGEKRLTPEGQPAPPRNPGDSSGSRGRSSATFSSSSASSPVAASPGSQGSGSEHSSFQWSPSGRRTGSLYCRVGIGFHLQIYPDGKVNGSHEASVLSILEIFAVSQGIVGIRGVFSNKFLAMSKKGKLHASAKFTDDCKFRERFQENSYNTYASAIHRTEKTGREWYVALNKRGKAKRGCSPRVKPQHVSTHFLPRFKQSEQPELSFTVTVPEKKKPPVKPKVPLSQPRRSPSPVKYRLKFRFG.

Positions 1 to 20 are cleaved as a signal peptide; sequence MSLSLLFLIFCSHLIHSAWA. Residues 25–81 form a disordered region; sequence RLTPEGQPAPPRNPGDSSGSRGRSSATFSSSSASSPVAASPGSQGSGSEHSSFQWSP. Over residues 38-72 the composition is skewed to low complexity; it reads PGDSSGSRGRSSATFSSSSASSPVAASPGSQGSGS. N-linked (GlcNAc...) asparagine glycosylation occurs at Asn108. Residues 227 to 254 are disordered; that stretch reads FTVTVPEKKKPPVKPKVPLSQPRRSPSP.

Belongs to the heparin-binding growth factors family. As to quaternary structure, interacts with FGFR1 and FGFR2. Affinity between fibroblast growth factors (FGFs) and their receptors is increased by heparan sulfate glycosaminoglycans that function as coreceptors.

It localises to the secreted. Its function is as follows. Plays an important role in the regulation of cell proliferation and cell differentiation. Required for normal regulation of the hair growth cycle. Functions as an inhibitor of hair elongation by promoting progression from anagen, the growth phase of the hair follicle, into catagen the apoptosis-induced regression phase. The chain is Fibroblast growth factor 5 (Fgf5) from Mus musculus (Mouse).